We begin with the raw amino-acid sequence, 257 residues long: 3-methyl-2-oxobutanoate hydroxymethyltransferase (257 aa).

2 residues coordinate Mg(2+): Asp42 and Asp86. Residues 42–43 (DS), Asp86, and Lys116 contribute to the 3-methyl-2-oxobutanoate site. A Mg(2+)-binding site is contributed by Glu118. Residue Glu185 is the Proton acceptor of the active site.

This sequence belongs to the PanB family. In terms of assembly, homodecamer; pentamer of dimers. Mg(2+) is required as a cofactor.

The protein localises to the cytoplasm. The enzyme catalyses 3-methyl-2-oxobutanoate + (6R)-5,10-methylene-5,6,7,8-tetrahydrofolate + H2O = 2-dehydropantoate + (6S)-5,6,7,8-tetrahydrofolate. It participates in cofactor biosynthesis; (R)-pantothenate biosynthesis; (R)-pantoate from 3-methyl-2-oxobutanoate: step 1/2. Functionally, catalyzes the reversible reaction in which hydroxymethyl group from 5,10-methylenetetrahydrofolate is transferred onto alpha-ketoisovalerate to form ketopantoate. This is 3-methyl-2-oxobutanoate hydroxymethyltransferase from Prochlorococcus marinus (strain MIT 9301).